The following is a 695-amino-acid chain: RING finger protein 145 (695 aa).

Transmembrane regions (helical) follow at residues 53–73 (YLALNMHYVGYILSVVLLTLP), 77–97 (LAKLYLYFVAALLLFAGHQIS), 123–143 (FITALVGQLVVCTLCSCVMKT), 146–166 (IWLFSAHMLPLLARLCLIPIE), 168–188 (IVVINKFAMIFTGLEVLYFLA), 225–245 (LVVPVLFMVFWLVLFALQIYT), 275–295 (YSLLGLVFTVSFVALGVLTLC), 316–336 (TEGVTLLILAVQTGLIELQVV), 340–360 (FLLSIILFIVVASILQSMLEI), 384–404 (SLCLFLLVFPSYMAYMICQFF), 410–430 (LLIIISSSILTSLQVLGTLFV), 460–480 (LLEFLVALCVVAYGVSETVFG), and 482–502 (WTVMGSMIIFIHSYYNVWLRA). Residues 537–575 (CSICYQDMNSAVITPCSHFFHPGCLKKWLYVQETCPLCH) form an RING-type; atypical zinc finger. Residues 589-604 (SGSSTNPVVEQSANNP) show a composition bias toward polar residues. Residues 589–608 (SGSSTNPVVEQSANNPPQEP) form a disordered region.

The protein localises to the membrane. This is RING finger protein 145 (rnf145) from Xenopus laevis (African clawed frog).